The chain runs to 894 residues: E3 ubiquitin-protein ligase SH3RF1 (894 aa).

An RING-type zinc finger spans residues 12–53; it reads CPVCLERLDASAKVLPCQHTFCKRCLLGIVGSRNELRCPECR. SH3 domains are found at residues 134–193 and 196–259; these read PQLP…IIKP and QPPP…FNSA. Residues 274-323 form a disordered region; that stretch reads VDTAECPSATAAQSSSASKHSDTKKNTRKRHSFTSLTMANKSSQASQNRH. Over residues 281–291 the composition is skewed to low complexity; that stretch reads SATAAQSSSAS. Positions 293-363 are interaction with RAC1; that stretch reads HSDTKKNTRK…APSQVHISTT (71 aa). A Phosphoserine modification is found at serine 305. Residues 306–322 are compositionally biased toward polar residues; sequence FTSLTMANKSSQASQNR. The tract at residues 448–551 is interaction with AKT2; it reads HLRPQTRPSV…STAGGPAQKP (104 aa). The region spanning 453–514 is the SH3 3 domain; the sequence is TRPSVYVAIY…PGNYVAPVTR (62 aa). Disordered stretches follow at residues 526-556 and 682-751; these read MSTAGQASRGVTMVSPSTAGGPAQKPQGNGV and LETE…PTLD. Serine 540 carries the phosphoserine modification. A compositionally biased stretch (polar residues) spans 700-713; that stretch reads SPESAASACGNSSA. A compositionally biased stretch (basic and acidic residues) spans 715–726; sequence KPDKDSKKEKKG. Position 743 is a phosphoserine (serine 743). Residues 835-894 form the SH3 4 domain; sequence VVCERHRVVVSYPPQSEAELELKEGDIVFVHKKREDGWFKGTLQRNGKTGLFPGSFVENI.

This sequence belongs to the SH3RF family. Interacts with HERP1. Interacts with RAC1; in a GTP-dependent manner. Interacts with MAP3K10/MLK2 and MAP3K11/MLK3. Interacts with MAPK8IP; this interaction leads to the PJAC complex (POSH-JIP or SH3RF1/MAPK8IP apoptotic complex) with a 1:1 ratio. Interacts with SIAH1. Probably part of a signaling complex that may contain SH3RF1, MAPK8IP, DLK1, MAP2K4/MKK4, MAP2K7/MKK7, MAPK8/JNK1, MAPK9/JNK2, AKT1 and AKT2. Found in a complex with RAC2, MAP3K7/TAK1, MAP2K7/MKK7, MAPK8IP1/JIP1, MAPK8/JNK1 and MAPK9/JNK2. Found in a complex with RAC1, MAP3K11/MLK3, MAP2K7/MKK7, MAPK8IP1/JIP1 and MAPK8/JNK1. Interacts with SH3RF2. In terms of processing, phosphorylated at Ser-305 by AKT1 and AKT2. When phosphorylated, it has reduced ability to bind Rac. Post-translationally, autoubiquitinated. Ubiquitinated by SH3RF2, leading to proteasome-mediated degradation.

The protein resides in the cytoplasm. Its subcellular location is the perinuclear region. The protein localises to the cell projection. It is found in the lamellipodium. It localises to the golgi apparatus. The protein resides in the trans-Golgi network. The catalysed reaction is S-ubiquitinyl-[E2 ubiquitin-conjugating enzyme]-L-cysteine + [acceptor protein]-L-lysine = [E2 ubiquitin-conjugating enzyme]-L-cysteine + N(6)-ubiquitinyl-[acceptor protein]-L-lysine.. Its pathway is protein modification; protein ubiquitination. Functionally, has E3 ubiquitin-protein ligase activity. In the absence of an external substrate, it can catalyze self-ubiquitination. Stimulates ubiquitination of potassium channel KCNJ1, enhancing it's dynamin-dependent and clathrin-independent endocytosis. Acts as a scaffold protein that coordinates with MAPK8IP1/JIP1 in organizing different components of the JNK pathway, including RAC1 or RAC2, MAP3K11/MLK3 or MAP3K7/TAK1, MAP2K7/MKK7, MAPK8/JNK1 and/or MAPK9/JNK2 into a functional multiprotein complex to ensure the effective activation of the JNK signaling pathway. Regulates the differentiation of CD4(+) and CD8(+) T-cells and promotes T-helper 1 (Th1) cell differentiation. Regulates the activation of MAPK8/JNK1 and MAPK9/JNK2 in CD4(+) T-cells and the activation of MAPK8/JNK1 in CD8(+) T-cells. Plays a crucial role in the migration of neocortical neurons in the developing brain. Controls proper cortical neuronal migration and the formation of proximal cytoplasmic dilation in the leading process (PCDLP) in migratory neocortical neurons by regulating the proper localization of activated RAC1 and F-actin assembly. This chain is E3 ubiquitin-protein ligase SH3RF1 (Sh3rf1), found in Rattus norvegicus (Rat).